A 116-amino-acid chain; its full sequence is uncharacterized protein (116 aa).

This is an uncharacterized protein from Bacillus subtilis (strain 168).